Reading from the N-terminus, the 127-residue chain is Glycine cleavage system H protein (127 aa).

The Lipoyl-binding domain maps to 24–105 (TALAGITDFA…YGEGWLVKIK (82 aa)). The residue at position 65 (lysine 65) is an N6-lipoyllysine.

Belongs to the GcvH family. The glycine cleavage system is composed of four proteins: P, T, L and H. (R)-lipoate is required as a cofactor.

The glycine cleavage system catalyzes the degradation of glycine. The H protein shuttles the methylamine group of glycine from the P protein to the T protein. The chain is Glycine cleavage system H protein from Chlorobium phaeobacteroides (strain DSM 266 / SMG 266 / 2430).